A 661-amino-acid chain; its full sequence is 1-deoxy-D-xylulose-5-phosphate synthase (661 aa).

Residues His98 and 139–141 (AHS) contribute to the thiamine diphosphate site. Mg(2+) is bound at residue Asp170. Thiamine diphosphate is bound by residues 171-172 (GA), Asn199, Tyr309, and Glu391. Asn199 serves as a coordination point for Mg(2+).

This sequence belongs to the transketolase family. DXPS subfamily. Homodimer. Requires Mg(2+) as cofactor. Thiamine diphosphate is required as a cofactor.

It catalyses the reaction D-glyceraldehyde 3-phosphate + pyruvate + H(+) = 1-deoxy-D-xylulose 5-phosphate + CO2. The protein operates within metabolic intermediate biosynthesis; 1-deoxy-D-xylulose 5-phosphate biosynthesis; 1-deoxy-D-xylulose 5-phosphate from D-glyceraldehyde 3-phosphate and pyruvate: step 1/1. Its function is as follows. Catalyzes the acyloin condensation reaction between C atoms 2 and 3 of pyruvate and glyceraldehyde 3-phosphate to yield 1-deoxy-D-xylulose-5-phosphate (DXP). This chain is 1-deoxy-D-xylulose-5-phosphate synthase, found in Bradyrhizobium diazoefficiens (strain JCM 10833 / BCRC 13528 / IAM 13628 / NBRC 14792 / USDA 110).